A 347-amino-acid chain; its full sequence is Phenylalanine--tRNA ligase alpha subunit (347 aa).

Residue E261 participates in Mg(2+) binding.

It belongs to the class-II aminoacyl-tRNA synthetase family. Phe-tRNA synthetase alpha subunit type 1 subfamily. Tetramer of two alpha and two beta subunits. The cofactor is Mg(2+).

The protein localises to the cytoplasm. The enzyme catalyses tRNA(Phe) + L-phenylalanine + ATP = L-phenylalanyl-tRNA(Phe) + AMP + diphosphate + H(+). This is Phenylalanine--tRNA ligase alpha subunit from Streptococcus equi subsp. equi (strain 4047).